The primary structure comprises 491 residues: MANYFNTLNLRQQLAQLGKCRFMGRDEFADGASYLQGKKVVIVGCGAQGLNQGLNMRDSGLDISYALRKEAIAEKRASWRKATENGFKVGTYEELIPQADLVVNLTPDKQHSDVVRSVQPLMKDGAALGYSHGFNIVEVGEQIRKDITVVMVAPKCPGTEVREEYKRGFGVPTLIAVHPENDPQGEGMAIAKAWAAATGGHRAGVLESSFVAEVKSDLMGEQTILCGMLQAGSLLCFDKLVAEGTDPAYAEKLIQFGWETITEALKQGGITLMMDRLSNPAKLRAYALSEQLKEIMAPLFQKHMDDIISGEFSSGMMADWANDDKKLLTWREETGKTAFETAPQYEGKIGEQEYFDKGVLMIAMVKAGVELAFETMVDSGIIEESAYYESLHELPLIANTIARKRLYEMNVVISDTAEYGNYLFSYACVPLLKPFMAELQPGDLGSAIPEGAVDNAQLRDVNDAIRSHAIEQVGKKLRGYMTDMKRIAVAG.

One can recognise a KARI N-terminal Rossmann domain in the interval 15–208 (AQLGKCRFMG…GGHRAGVLES (194 aa)). NADP(+)-binding positions include 45–48 (CGAQ), R68, R76, S78, and 108–110 (DKQ). The active site involves H132. Residue G158 coordinates NADP(+). 2 consecutive KARI C-terminal knotted domains span residues 209–344 (SFVA…TAPQ) and 345–484 (YEGK…MTDM). The Mg(2+) site is built by D217, E221, E389, and E393. S414 lines the substrate pocket.

This sequence belongs to the ketol-acid reductoisomerase family. Mg(2+) is required as a cofactor.

It carries out the reaction (2R)-2,3-dihydroxy-3-methylbutanoate + NADP(+) = (2S)-2-acetolactate + NADPH + H(+). It catalyses the reaction (2R,3R)-2,3-dihydroxy-3-methylpentanoate + NADP(+) = (S)-2-ethyl-2-hydroxy-3-oxobutanoate + NADPH + H(+). It functions in the pathway amino-acid biosynthesis; L-isoleucine biosynthesis; L-isoleucine from 2-oxobutanoate: step 2/4. The protein operates within amino-acid biosynthesis; L-valine biosynthesis; L-valine from pyruvate: step 2/4. Functionally, involved in the biosynthesis of branched-chain amino acids (BCAA). Catalyzes an alkyl-migration followed by a ketol-acid reduction of (S)-2-acetolactate (S2AL) to yield (R)-2,3-dihydroxy-isovalerate. In the isomerase reaction, S2AL is rearranged via a Mg-dependent methyl migration to produce 3-hydroxy-3-methyl-2-ketobutyrate (HMKB). In the reductase reaction, this 2-ketoacid undergoes a metal-dependent reduction by NADPH to yield (R)-2,3-dihydroxy-isovalerate. In Salmonella typhimurium (strain LT2 / SGSC1412 / ATCC 700720), this protein is Ketol-acid reductoisomerase (NADP(+)).